Reading from the N-terminus, the 130-residue chain is uncharacterized protein (130 aa).

The segment at 1-62 (MRMYSSDAHE…ASGVGSSCKR (62 aa)) is disordered. The span at 21 to 30 (PPHPLPPTGS) shows a compositional bias: pro residues.

This is an uncharacterized protein from Homo sapiens (Human).